The following is a 146-amino-acid chain: Allograft inflammatory factor 1 (146 aa).

Ser-1 carries the post-translational modification N-acetylserine. Lys-10 carries the post-translational modification N6-acetyllysine. Phosphoserine is present on Ser-38. The EF-hand 1 domain occupies 44 to 79; sequence RKLEAFKQKYMEFDLNGNGDIDIMSLKRMLEKLGVP. 5 residues coordinate Ca(2+): Asp-57, Asn-59, Asn-61, Asp-63, and Thr-99. In terms of domain architecture, EF-hand 2; degenerate spans 81–115; that stretch reads THLELKKLIKEVSSGSGETFSYSIFLKMMLGKRSA. The interval 127-146 is disordered; the sequence is AREQEKPTGPPAKKAISELP.

As to quaternary structure, homodimer (Potential). Monomer. Interacts with LCP1. As to expression, microglial cells in the central nervous system and dendritic cells and macrophages in several organs.

It is found in the cytoplasm. It localises to the cytoskeleton. The protein localises to the cell projection. Its subcellular location is the ruffle membrane. The protein resides in the phagocytic cup. In terms of biological role, actin-binding protein that enhances membrane ruffling and RAC activation. Enhances the actin-bundling activity of LCP1. Binds calcium. Plays a role in RAC signaling and in phagocytosis. May play a role in macrophage activation and function. Promotes the proliferation of vascular smooth muscle cells and of T-lymphocytes. Enhances lymphocyte migration. Plays a role in vascular inflammation. Has a dual influence on glucose-induced insulin secretion: inhibition at low concentration and stimulation at high concentrations. The chain is Allograft inflammatory factor 1 (AIF1) from Sus scrofa (Pig).